The following is a 277-amino-acid chain: MAIKSYKPYTPSRRYMTGLSSEDITAKPSVRSLLVKIPASGGRNNNGRITSRHKEAGAKKLYRIIDFKRKKFGIEGRVEAIEYDPNRNCRIALISYKDGEKRYIIRPNGLNVGDVIASIDEGALDIKPGNAMKLKFIPVGTIVHNIELKPGKGAQIARSAGGYAQLMGKEEKYVIVRMPSGEMRQILAECMASIGVVGNEDWANITIGKAGRNRYRGIRPQTRGSAMNPVDHPHGGGEGKKNSGRHPVTPWGKPTKGAKTRRKKASDKLIISRRKGK.

Positions 219 to 277 are disordered; sequence RPQTRGSAMNPVDHPHGGGEGKKNSGRHPVTPWGKPTKGAKTRRKKASDKLIISRRKGK. Residues 231-241 are compositionally biased toward basic and acidic residues; that stretch reads DHPHGGGEGKK. A compositionally biased stretch (basic residues) spans 256-277; sequence KGAKTRRKKASDKLIISRRKGK.

This sequence belongs to the universal ribosomal protein uL2 family. In terms of assembly, part of the 50S ribosomal subunit. Forms a bridge to the 30S subunit in the 70S ribosome.

Its function is as follows. One of the primary rRNA binding proteins. Required for association of the 30S and 50S subunits to form the 70S ribosome, for tRNA binding and peptide bond formation. It has been suggested to have peptidyltransferase activity; this is somewhat controversial. Makes several contacts with the 16S rRNA in the 70S ribosome. In Campylobacter curvus (strain 525.92), this protein is Large ribosomal subunit protein uL2.